Here is a 441-residue protein sequence, read N- to C-terminus: uncharacterized protein (441 aa).

57–64 (GVRRGGKT) contributes to the ATP binding site.

This is an uncharacterized protein from Methanocaldococcus jannaschii (strain ATCC 43067 / DSM 2661 / JAL-1 / JCM 10045 / NBRC 100440) (Methanococcus jannaschii).